Here is a 512-residue protein sequence, read N- to C-terminus: MTQFITHKWLAALGLASSIAAFPALAAKDVVVAVGSNFTTLDPYDANDTLSQAVAKSFYQGLFGLDKDMKVKNVLAEGYTVSDDGLTYTITLRQGVKFQDGADFDAAAVKANLDRASNPDNHLKRYNLYKNIAKTEVVDPVTVKITLKQPFSAFINILAHPATAMISPQALEKYGKDIGFHPVGTGPYQLETWNQTDFVKVKKFSGYWQQGLPKLDSITWRPVTDNNTRAAMLQTGEAQFAFPIPYEQAALLAKNKNLELVASPSIMQRYISMNVTQKPFDNPKVREALNYAINRQALVKVAFAGYATPATGVVPPSIAYAQSYQPWPYDPAKARELLKEAGYPDGFSTTLWSSHNHSTAQKVLQFTQQQLAQIGIKARITAMDAGQRAAEVEGKGQKESGVRMFYTGWSASTGEADWALSPLFASQNWPPTQFNTALYSNKQVDSDLAAALKTNDPQEKTRLYKEAQDIIWKESPWIPLVVEKLVSAHSKNLTGFWIMPDTGFSFDDADLK.

Positions 1–26 (MTQFITHKWLAALGLASSIAAFPALA) are cleaved as a signal peptide.

The protein belongs to the bacterial solute-binding protein 5 family. The complex is composed of two ATP-binding proteins (GsiA), two transmembrane proteins (GsiC and GsiD) and a solute-binding protein (GsiB).

Its subcellular location is the periplasm. Part of the ABC transporter complex GsiABCD involved in glutathione import. Binds glutathione. The chain is Glutathione-binding protein GsiB from Salmonella paratyphi A (strain ATCC 9150 / SARB42).